The sequence spans 605 residues: Elongation factor 4 (605 aa).

Residues 5-187 (ALIRNFSIIA…AVVERIPPPK (183 aa)) enclose the tr-type G domain. GTP is bound by residues 17-22 (DHGKST) and 134-137 (NKID).

Belongs to the TRAFAC class translation factor GTPase superfamily. Classic translation factor GTPase family. LepA subfamily.

The protein localises to the cell inner membrane. The enzyme catalyses GTP + H2O = GDP + phosphate + H(+). Functionally, required for accurate and efficient protein synthesis under certain stress conditions. May act as a fidelity factor of the translation reaction, by catalyzing a one-codon backward translocation of tRNAs on improperly translocated ribosomes. Back-translocation proceeds from a post-translocation (POST) complex to a pre-translocation (PRE) complex, thus giving elongation factor G a second chance to translocate the tRNAs correctly. Binds to ribosomes in a GTP-dependent manner. This Novosphingobium aromaticivorans (strain ATCC 700278 / DSM 12444 / CCUG 56034 / CIP 105152 / NBRC 16084 / F199) protein is Elongation factor 4.